Here is a 117-residue protein sequence, read N- to C-terminus: DNA-directed RNA polymerase subunit omega (117 aa).

The protein belongs to the RNA polymerase subunit omega family. In terms of assembly, the RNAP catalytic core consists of 2 alpha, 1 beta, 1 beta' and 1 omega subunit. When a sigma factor is associated with the core the holoenzyme is formed, which can initiate transcription.

It carries out the reaction RNA(n) + a ribonucleoside 5'-triphosphate = RNA(n+1) + diphosphate. Its function is as follows. Promotes RNA polymerase assembly. Latches the N- and C-terminal regions of the beta' subunit thereby facilitating its interaction with the beta and alpha subunits. The protein is DNA-directed RNA polymerase subunit omega of Cereibacter sphaeroides (strain ATCC 17025 / ATH 2.4.3) (Rhodobacter sphaeroides).